Reading from the N-terminus, the 429-residue chain is Formate-dependent phosphoribosylglycinamide formyltransferase (429 aa).

N(1)-(5-phospho-beta-D-ribosyl)glycinamide-binding positions include 26–27 (EL) and Glu86. Residues Arg118, Lys159, 199-202 (EEHI), and Glu207 contribute to the ATP site. The ATP-grasp domain maps to 123-319 (ETLVKEAKVP…EFGLHLRAVL (197 aa)). Residues Glu276 and Glu288 each contribute to the Mg(2+) site. N(1)-(5-phospho-beta-D-ribosyl)glycinamide contacts are provided by residues Asp295, Lys375, and 382-383 (RR).

It belongs to the PurK/PurT family. Homodimer.

It carries out the reaction N(1)-(5-phospho-beta-D-ribosyl)glycinamide + formate + ATP = N(2)-formyl-N(1)-(5-phospho-beta-D-ribosyl)glycinamide + ADP + phosphate + H(+). Its pathway is purine metabolism; IMP biosynthesis via de novo pathway; N(2)-formyl-N(1)-(5-phospho-D-ribosyl)glycinamide from N(1)-(5-phospho-D-ribosyl)glycinamide (formate route): step 1/1. Functionally, involved in the de novo purine biosynthesis. Catalyzes the transfer of formate to 5-phospho-ribosyl-glycinamide (GAR), producing 5-phospho-ribosyl-N-formylglycinamide (FGAR). Formate is provided by PurU via hydrolysis of 10-formyl-tetrahydrofolate. This is Formate-dependent phosphoribosylglycinamide formyltransferase from Pyrococcus abyssi (strain GE5 / Orsay).